A 964-amino-acid polypeptide reads, in one-letter code: Myocardin-related transcription factor A (964 aa).

The mediates interaction with SCAI and ACTB stretch occupies residues 1–291 (MTLLEPEMLM…KQDKGAPAMD (291 aa)). Residues 15–40 (SVLQLKLQQRRTREELVSQGIMPPLK) form an RPEL 1 repeat. S41 bears the Phosphoserine mark. The segment at 41–58 (SPAAFHEQRRSLERARTE) is intervening spacer sequence 1. The RPEL 2 repeat unit spans residues 59 to 84 (DYLKRKIRSRPERAELVRMHILEETS). Residues 62-100 (KRKIRSRPERAELVRMHILEETSAEPSLQAKQLKLKRAR) carry the Bipartite Nuclear localization signal motif. An intervening spacer sequence 2 region spans residues 85–102 (AEPSLQAKQLKLKRARLA). An RPEL 3 repeat occupies 103-128 (DDLNEKIAQRPGPMELVEKNILPVES). 2 disordered regions span residues 145–292 (ADSS…AMDS) and 328–371 (LPAP…RQSS). Phosphoserine occurs at positions 159, 174, and 191. The segment covering 186–197 (SATSISPTQVLS) has biased composition (polar residues). Over residues 215–224 (PPLPPAPLLP) the composition is skewed to pro residues. Positions 251–266 (ASEKSQRSKKAKELKP) are enriched in basic and acidic residues. The span at 340 to 365 (GSSAPTPSRSLSTSSSPSSGTPGPSG) shows a compositional bias: low complexity. Phosphoserine occurs at positions 349 and 351. Residue T352 is modified to Phosphothreonine. Residues S355 and S358 each carry the phosphoserine modification. T360 carries the post-translational modification Phosphothreonine. S371 carries the post-translational modification Phosphoserine. Residues 385–419 (LDDMKVAELKQELKLRSLPVSGTKTELIERLRAYQ) form the SAP domain. A phosphoserine mark is found at S423 and S484. The tract at residues 484–508 (STGSTPPVSPTPSERSLLSTGDENS) is disordered. T485 carries the phosphothreonine modification. Phosphoserine is present on S487. T488 is subject to Phosphothreonine. S492 is modified (phosphoserine). The residue at position 494 (T494) is a Phosphothreonine. S496 is subject to Phosphoserine. Over residues 497 to 508 (ERSLLSTGDENS) the composition is skewed to polar residues. Phosphoserine occurs at positions 520, 530, 544, and 548. Residues 552–600 (RAELEGLDKDQMLQEKDKQIEELTRMLQQKQQLVELLRLQLEQQKRAQQ) are a coiled coil. Residues S605, S606, S651, S687, S718, S724, and S728 each carry the phosphoserine modification. Residues 638 to 673 (TTNHGDTQAPAPESPPVVVKQEAGPPEPDLAPSSQL) are disordered. 2 disordered regions span residues 706–779 (NKSA…SSSQ) and 796–849 (ADFK…RLED). The span at 715 to 727 (PAGSPQQPLSQPG) shows a compositional bias: low complexity. Residues 764 to 779 (TVTQQPKQQENGSSSQ) show a composition bias toward polar residues. The segment covering 796–810 (ADFKEPPSLPGKEKS) has biased composition (basic and acidic residues). Position 810 is a phosphoserine (S810). The residue at position 822 (T822) is a Phosphothreonine. Phosphoserine occurs at positions 826 and 840. At T842 the chain carries Phosphothreonine. S892 carries the post-translational modification Phosphoserine.

Interacts with SRF, forming the SRF-MRTFA nuclear complex which binds the 5'-CArG-3' consensus motif (CArG box) on DNA via SRF. Interacts (via RPEL repeats) with globular actin (G-actin), thereby regulating its subcellular location and activity of the complex formed with SRF. Either forms a trivalent (by binding three G-actin monomers) or pentavalent (by binding five G-actin monomers) complex with G-actin. Forms a nuclear ternary complex with SCAI and SRF, leading to suppress MRTFA-induced SRF transcriptional activity. Interacts with beta-actin (ACTB); interaction with ACTB prevents interaction with SCAI. Interacts with MRTFB. Post-translationally, phosphorylation at Ser-41 by Erk inhibits binding of globular actin (G-actin), unmasking the nuclear localization signal (NLS) and promoting nuclear import. Expressed in heart, brain, spleen, lung, liver, muscle, kidney and testis.

The protein localises to the cytoplasm. It localises to the nucleus. Transcription coactivator that associates with the serum response factor (SRF) transcription factor to control expression of genes regulating the cytoskeleton during development, morphogenesis and cell migration. The SRF-MRTFA complex activity responds to Rho GTPase-induced changes in cellular globular actin (G-actin) concentration, thereby coupling cytoskeletal gene expression to cytoskeletal dynamics. MRTFA binds G-actin via its RPEL repeats, regulating activity of the MRTFA-SRF complex. Activity is also regulated by filamentous actin (F-actin) in the nucleus. The chain is Myocardin-related transcription factor A (Mrtfa) from Mus musculus (Mouse).